The primary structure comprises 161 residues: Probable metalloprotease HVO_1016 (161 aa).

In terms of domain architecture, MPN spans 10-131; the sequence is VGIAADALDF…WEAFDQSGEV (122 aa). The Proton donor/acceptor role is filled by glutamate 31. 3 residues coordinate Zn(2+): histidine 87, histidine 89, and aspartate 100. The JAMM motif signature appears at 87–100; that stretch reads HSHPNGVLRPSDAD.

It belongs to the peptidase M67B family. Monomer and homodimer. Requires Zn(2+) as cofactor.

In terms of biological role, probable metalloprotease. Does not hydrolyze SAMP1- and SAMP2-protein conjugates, diglycine-AMC, Ub-AMC, hemoglobin, cytochrome c, carbonic anhydrase, creatinine phosphokinase, beta-amylase and bovine serum albumin. The sequence is that of Probable metalloprotease HVO_1016 from Haloferax volcanii (strain ATCC 29605 / DSM 3757 / JCM 8879 / NBRC 14742 / NCIMB 2012 / VKM B-1768 / DS2) (Halobacterium volcanii).